We begin with the raw amino-acid sequence, 469 residues long: Citrate synthase, mitochondrial (469 aa).

A mitochondrion-targeting transit peptide spans 1–31 (MTLLTASSRAAARLLGAKNSSCIIFAARHAS). Catalysis depends on residues H304 and H350. R359 is an oxaloacetate binding site. D405 is a catalytic residue. Oxaloacetate-binding residues include R431 and R451.

This sequence belongs to the citrate synthase family. Homodimer.

It is found in the mitochondrion matrix. The catalysed reaction is oxaloacetate + acetyl-CoA + H2O = citrate + CoA + H(+). It functions in the pathway carbohydrate metabolism; tricarboxylic acid cycle; isocitrate from oxaloacetate: step 1/2. Its function is as follows. Key enzyme of the Krebs tricarboxylic acid cycle which catalyzes the synthesis of citrate from acetyl coenzyme A and oxaloacetate. This Amblyrhynchus cristatus (Galapagos marine iguana) protein is Citrate synthase, mitochondrial (CS).